Reading from the N-terminus, the 104-residue chain is L-rhamnose mutarotase (104 aa).

Tyr18 serves as a coordination point for substrate. The active-site Proton donor is the His22. Substrate contacts are provided by residues Tyr41 and 76–77 (WW).

Belongs to the rhamnose mutarotase family. As to quaternary structure, homodimer.

Its subcellular location is the cytoplasm. The enzyme catalyses alpha-L-rhamnose = beta-L-rhamnose. It participates in carbohydrate metabolism; L-rhamnose metabolism. Its function is as follows. Involved in the anomeric conversion of L-rhamnose. The polypeptide is L-rhamnose mutarotase (Burkholderia ambifaria (strain ATCC BAA-244 / DSM 16087 / CCUG 44356 / LMG 19182 / AMMD) (Burkholderia cepacia (strain AMMD))).